The sequence spans 238 residues: Auxin-responsive protein IAA2 (238 aa).

Residues 24–28 (LCLGL) carry the EAR-like (transcriptional repression) motif. Low complexity-rich tracts occupy residues 33–44 (SSSSSSKPSEGS), 59–69 (ASKPSGAAAAA), and 85–94 (ASSSSSSSKQ). Disordered regions lie at residues 33-69 (SSSSSSKPSEGSTAAPAFALRSNGTNASKPSGAAAAA) and 82-114 (RNLASSSSSSSKQAPPPPSSSPQNGDKASKDGG). The PB1 domain occupies 118 to 216 (GMFVKINMDG…TAKRLRVLKS (99 aa)). Positions 217 to 238 (SDLPPPSLMRAAGSRKRAAADS) are disordered. The span at 229–238 (GSRKRAAADS) shows a compositional bias: basic residues.

The protein belongs to the Aux/IAA family. Homodimers and heterodimers. In terms of tissue distribution, highly expressed in flowers.

It is found in the nucleus. Its function is as follows. Aux/IAA proteins are short-lived transcriptional factors that function as repressors of early auxin response genes at low auxin concentrations. The chain is Auxin-responsive protein IAA2 (IAA2) from Oryza sativa subsp. japonica (Rice).